We begin with the raw amino-acid sequence, 206 residues long: MNAVPDGRSDKPRSVVGVLALQGDTREHLAALTEAGAEAVTVRRLRELEAVDALVIPGGESTAMSHLLREFELLEPLRARLAEGMPAYGSCAGMILLATEILDAGAAGREATPLKGIDMSVRRNAFGRQVDSFEGDIPFVGLDSPVHAVFIRAPWVERIGDGVEVLARADGHIVAVRQGRMLATAFHPEVTGDRRVHKLFVDMVSE.

Position 59-61 (59-61 (GES)) interacts with L-glutamine. The active-site Nucleophile is the Cys-91. L-glutamine contacts are provided by residues Arg-123 and 151 to 152 (IR). Catalysis depends on charge relay system residues His-187 and Glu-189.

This sequence belongs to the glutaminase PdxT/SNO family. In the presence of PdxS, forms a dodecamer of heterodimers. Only shows activity in the heterodimer.

The enzyme catalyses aldehydo-D-ribose 5-phosphate + D-glyceraldehyde 3-phosphate + L-glutamine = pyridoxal 5'-phosphate + L-glutamate + phosphate + 3 H2O + H(+). It carries out the reaction L-glutamine + H2O = L-glutamate + NH4(+). Its pathway is cofactor biosynthesis; pyridoxal 5'-phosphate biosynthesis. Functionally, catalyzes the hydrolysis of glutamine to glutamate and ammonia as part of the biosynthesis of pyridoxal 5'-phosphate. The resulting ammonia molecule is channeled to the active site of PdxS. This chain is Pyridoxal 5'-phosphate synthase subunit PdxT, found in Mycobacterium sp. (strain KMS).